Reading from the N-terminus, the 570-residue chain is Formate--tetrahydrofolate ligase (570 aa).

65–72 is an ATP binding site; that stretch reads TPFGEGKT.

It belongs to the formate--tetrahydrofolate ligase family.

The enzyme catalyses (6S)-5,6,7,8-tetrahydrofolate + formate + ATP = (6R)-10-formyltetrahydrofolate + ADP + phosphate. It participates in one-carbon metabolism; tetrahydrofolate interconversion. In Shewanella woodyi (strain ATCC 51908 / MS32), this protein is Formate--tetrahydrofolate ligase.